The chain runs to 114 residues: Prostate stem cell antigen (114 aa).

A signal peptide spans 1–11 (MAGLALQPGTA). Residues 12 to 86 (LLCYSCKAQV…CCDTDLCNAS (75 aa)) enclose the UPAR/Ly6 domain. 5 disulfides stabilise this stretch: Cys14–Cys39, Cys17–Cys26, Cys32–Cys57, Cys61–Cys77, and Cys78–Cys83. Asn31 is a glycosylation site (N-linked (GlcNAc...) asparagine). Ser86 carries GPI-anchor amidated serine lipidation. The propeptide at 86–114 (SGAHALQPAAAILALLPALGLLLWGPGQL) is removed in mature form.

In terms of assembly, interacts with CHRNA4. Post-translationally, N-glycosylated. As to expression, highly expressed in prostate (basal, secretory and neuroendocrine epithelium cells). Also found in bladder (transitional epithelium), placenta (trophoblasts), stomach (neuroendocrine cells), colon (neuroendocrine cells) and kidney (collecting ducts). Overexpressed in prostate cancers and expression is correlated with tumor stage, grade and androgen-independence. Highly expressed in prostate cancer bone metastases. Expressed in gastric epithelial cells, mainly in the isthmus (at protein level). Not detected in normal intestinal epithelium (at protein level). Expressed in brain cortex; expression is significantly increased in the front cortex of Alzheimer disease patients.

It is found in the cell membrane. May be involved in the regulation of cell proliferation. Has a cell-proliferation inhibition activity in vitro. Its function is as follows. May act as a modulator of nicotinic acetylcholine receptors (nAChRs) activity. In vitro inhibits nicotine-induced signaling probably implicating alpha-3:beta-2- or alpha-7-containing nAChRs. In Homo sapiens (Human), this protein is Prostate stem cell antigen (PSCA).